The following is a 411-amino-acid chain: Formate-dependent phosphoribosylglycinamide formyltransferase (411 aa).

25 to 26 (EL) serves as a coordination point for N(1)-(5-phospho-beta-D-ribosyl)glycinamide. ATP is bound by residues arginine 118, lysine 159, 164–169 (SSGAGQ), 199–202 (EQYI), and glutamate 207. The region spanning 123-318 (TFAHDKLGLP…EFDLHARAIL (196 aa)) is the ATP-grasp domain. 2 residues coordinate Mg(2+): glutamate 277 and glutamate 289. N(1)-(5-phospho-beta-D-ribosyl)glycinamide is bound by residues aspartate 296, lysine 366, and 373-374 (RR).

The protein belongs to the PurK/PurT family. As to quaternary structure, homodimer.

It carries out the reaction N(1)-(5-phospho-beta-D-ribosyl)glycinamide + formate + ATP = N(2)-formyl-N(1)-(5-phospho-beta-D-ribosyl)glycinamide + ADP + phosphate + H(+). The protein operates within purine metabolism; IMP biosynthesis via de novo pathway; N(2)-formyl-N(1)-(5-phospho-D-ribosyl)glycinamide from N(1)-(5-phospho-D-ribosyl)glycinamide (formate route): step 1/1. Functionally, involved in the de novo purine biosynthesis. Catalyzes the transfer of formate to 5-phospho-ribosyl-glycinamide (GAR), producing 5-phospho-ribosyl-N-formylglycinamide (FGAR). Formate is provided by PurU via hydrolysis of 10-formyl-tetrahydrofolate. This chain is Formate-dependent phosphoribosylglycinamide formyltransferase, found in Corynebacterium jeikeium (strain K411).